Reading from the N-terminus, the 1021-residue chain is Collagenase ColH (1021 aa).

An N-terminal signal peptide occupies residues 1–30 (MKRKCLSKRLMLAITMATIFTVNSTLPIYA). Residues 31–40 (AVDKNNATAA) constitute a propeptide that is removed on maturation. The segment at 41 to 320 (VQNESKRYTV…SADQIKRHYD (280 aa)) is activator domain. Residues 41–717 (VQNESKRYTV…TYDVVFHGYL (677 aa)) are S1 metalloprotease domain. Residues 330-601 (PLDKFKKEGK…MQERIDNYEN (272 aa)) are catalytic subdomain. D421 is a binding site for Zn(2+). E430 is a Ca(2+) binding site. H455 serves as a coordination point for Zn(2+). The active site involves E456. H459 provides a ligand contact to Zn(2+). The Ca(2+) site is built by G463, V467, and G469. Position 487 (E487) interacts with Zn(2+). The helper subdomain stretch occupies residues 609–721 (DDYLVRHAYK…VFHGYLPNEG (113 aa)). Residues 718–810 (PNEGDSKNSL…VSTTTAEIKD (93 aa)) form an S2a domain region. Ca(2+) is bound by residues N725, S726, D753, D755, D794, N814, K815, D842, D844, D884, E908, E910, N912, N913, T931, D937, Q938, and D939. A PKD 1 domain is found at 727–808 (LPYGKINGTY…SSVSTTTAEI (82 aa)). An S2b domain region spans residues 811-904 (LSENKLPVIY…KIKITDPVYP (94 aa)). Residues 816 to 905 (LPVIYMHVPK…IKITDPVYPI (90 aa)) enclose the PKD 2 domain. Residues 903 to 922 (YPIGTEKEPNNSKETASGPI) form a disordered region. The segment at 905–1021 (IGTEKEPNNS…RINIEGSVGR (117 aa)) is S3 collagen-binding domain. Positions 1002 to 1004 (YMF) are collagen-binding.

The protein belongs to the peptidase M9B family. Collagenase subfamily. Ca(2+) serves as cofactor. The cofactor is Zn(2+). Post-translationally, upon purification gives rise to 98 kDa, 105 kDa and 116 kDa (full-length) proteins, all of which have the same N-terminus.

The protein localises to the secreted. The enzyme catalyses Digestion of native collagen in the triple helical region at Xaa-|-Gly bonds. With synthetic peptides, a preference is shown for Gly at P3 and P1', Pro and Ala at P2 and P2', and hydroxyproline, Ala or Arg at P3'.. With respect to regulation, inhibited by EDTA. Inhibited by 1-10-phenanthroline. Inhibited by broad-spectrum zinc metalloprotease inhibitor batimastat. N-aryl mercaptoacetamide-based inhibitors have been isolated that act on clostridial collagenases with submicromolar affinity while having negligibile activity on human collagenases. In terms of biological role, clostridial collagenases are among the most efficient degraders of eukaryotic collagen known; saprophytes use collagen as a carbon source while pathogens additionally digest collagen to aid in host colonization. Has both tripeptidylcarboxypeptidase on Gly-X-Y and endopeptidase activities; the endopeptidase cuts within the triple helix region of collagen while tripeptidylcarboxypeptidase successively digests the exposed ends, thus clostridial collagenases can digest large sections of collagen. The full-length protein has collagenase activity, while both the 116 kDa and 98 kDa forms act on gelatin. In vitro digestion of soluble calf skin collagen fibrils requires both ColG and ColH; ColG forms missing the second collagen-binding domain is also synergistic with ColH, although their overall efficiency is decreased. Digestion of collagen requires Ca(2+) and is inhibited by EDTA. The activator domain (residues 119-388) and catalytic subdomain (330-601) open and close around substrate allowing digestion when the protein is closed. This is Collagenase ColH from Hathewaya histolytica (Clostridium histolyticum).